We begin with the raw amino-acid sequence, 31 residues long: Cytochrome b6-f complex subunit 6 (31 aa).

The helical transmembrane segment at 3–23 threads the bilayer; it reads ILISYFCFLLIFFLFTLILFF.

This sequence belongs to the PetL family. In terms of assembly, the 4 large subunits of the cytochrome b6-f complex are cytochrome b6, subunit IV (17 kDa polypeptide, PetD), cytochrome f and the Rieske protein, while the 4 small subunits are PetG, PetL, PetM and PetN. The complex functions as a dimer.

The protein localises to the plastid. Its subcellular location is the chloroplast thylakoid membrane. Functionally, component of the cytochrome b6-f complex, which mediates electron transfer between photosystem II (PSII) and photosystem I (PSI), cyclic electron flow around PSI, and state transitions. PetL is important for photoautotrophic growth as well as for electron transfer efficiency and stability of the cytochrome b6-f complex. The sequence is that of Cytochrome b6-f complex subunit 6 from Gnetum parvifolium (Small-leaved jointfir).